A 952-amino-acid polypeptide reads, in one-letter code: Isoleucine--tRNA ligase (952 aa).

The 'HIGH' region signature appears at 58–68; that stretch reads PYANGDIHIGH. An L-isoleucyl-5'-AMP-binding site is contributed by Glu576. Residues 617 to 621 carry the 'KMSKS' region motif; sequence KMSKS. Lys620 is a binding site for ATP. 4 residues coordinate Zn(2+): Cys915, Cys918, Cys935, and Cys938.

The protein belongs to the class-I aminoacyl-tRNA synthetase family. IleS type 1 subfamily. In terms of assembly, monomer. Requires Zn(2+) as cofactor.

The protein localises to the cytoplasm. The catalysed reaction is tRNA(Ile) + L-isoleucine + ATP = L-isoleucyl-tRNA(Ile) + AMP + diphosphate. Catalyzes the attachment of isoleucine to tRNA(Ile). As IleRS can inadvertently accommodate and process structurally similar amino acids such as valine, to avoid such errors it has two additional distinct tRNA(Ile)-dependent editing activities. One activity is designated as 'pretransfer' editing and involves the hydrolysis of activated Val-AMP. The other activity is designated 'posttransfer' editing and involves deacylation of mischarged Val-tRNA(Ile). In Vibrio atlanticus (strain LGP32) (Vibrio splendidus (strain Mel32)), this protein is Isoleucine--tRNA ligase.